A 184-amino-acid polypeptide reads, in one-letter code: Ribosome-recycling factor (184 aa).

The protein belongs to the RRF family.

The protein localises to the cytoplasm. Its function is as follows. Responsible for the release of ribosomes from messenger RNA at the termination of protein biosynthesis. May increase the efficiency of translation by recycling ribosomes from one round of translation to another. The sequence is that of Ribosome-recycling factor from Staphylococcus carnosus (strain TM300).